A 189-amino-acid polypeptide reads, in one-letter code: MSDKIFHNLSGKTLVATPHVITKGIYHKSLIYMLSHTEEGAIGLIFNRLVNHIDLKSFFKIKNDEITTPVMVPIYLGGPVEHEKGFFLHSSDYNKNLLLDFHNDLAVSSNLEISEDIAFGKGPKNSLFIIGYTAWKPGQLEEELETNLWLVMDCNKEFIFADNPESKWHNALKHLGIDEIHFSSQIGNA.

This sequence belongs to the UPF0301 (AlgH) family.

The polypeptide is UPF0301 protein RPR_01165 (Rickettsia peacockii (strain Rustic)).